A 233-amino-acid polypeptide reads, in one-letter code: Gamma-glutamyl-hercynylcysteine sulfoxide hydrolase (233 aa).

The Nucleophile role is filled by Cys2. One can recognise a Glutamine amidotransferase type-2 domain in the interval 2–233 (CRHLGWLGAQ…TALDRAKGPR (232 aa)).

The catalysed reaction is gamma-L-glutamyl-hercynylcysteine S-oxide + H2O = S-(hercyn-2-yl)-L-cysteine S-oxide + L-glutamate. It participates in amino-acid biosynthesis; ergothioneine biosynthesis. Functionally, catalyzes the hydrolysis of the gamma-glutamyl amide bond of hercynyl-gamma-L-glutamyl-L-cysteine sulfoxide to produce hercynylcysteine sulfoxide, a step in the biosynthesis pathway of ergothioneine. Ergothioneine is an antioxidant that protects mycobacteria from oxidative stress. The sequence is that of Gamma-glutamyl-hercynylcysteine sulfoxide hydrolase (egtC) from Mycobacterium tuberculosis (strain ATCC 25618 / H37Rv).